The sequence spans 333 residues: Phosphate acyltransferase (333 aa).

It belongs to the PlsX family. As to quaternary structure, homodimer. Probably interacts with PlsY.

It is found in the cytoplasm. The enzyme catalyses a fatty acyl-[ACP] + phosphate = an acyl phosphate + holo-[ACP]. Its pathway is lipid metabolism; phospholipid metabolism. In terms of biological role, catalyzes the reversible formation of acyl-phosphate (acyl-PO(4)) from acyl-[acyl-carrier-protein] (acyl-ACP). This enzyme utilizes acyl-ACP as fatty acyl donor, but not acyl-CoA. The chain is Phosphate acyltransferase from Clostridium botulinum (strain Alaska E43 / Type E3).